The chain runs to 267 residues: Ribosomal RNA small subunit methyltransferase A (267 aa).

Residues Asn18, Leu20, Gly45, Glu66, Asp91, and Asn112 each contribute to the S-adenosyl-L-methionine site.

The protein belongs to the class I-like SAM-binding methyltransferase superfamily. rRNA adenine N(6)-methyltransferase family. RsmA subfamily.

The protein resides in the cytoplasm. The catalysed reaction is adenosine(1518)/adenosine(1519) in 16S rRNA + 4 S-adenosyl-L-methionine = N(6)-dimethyladenosine(1518)/N(6)-dimethyladenosine(1519) in 16S rRNA + 4 S-adenosyl-L-homocysteine + 4 H(+). Specifically dimethylates two adjacent adenosines (A1518 and A1519) in the loop of a conserved hairpin near the 3'-end of 16S rRNA in the 30S particle. May play a critical role in biogenesis of 30S subunits. In Shewanella pealeana (strain ATCC 700345 / ANG-SQ1), this protein is Ribosomal RNA small subunit methyltransferase A.